Reading from the N-terminus, the 638-residue chain is RAF proto-oncogene serine/threonine-protein kinase (638 aa).

At Ser43 the chain carries Phosphoserine. The RBD domain maps to 56–130 (STMRVYLPNK…VGAELQVDFL (75 aa)). The segment at 137 to 183 (THNFVRKTFLKLAFCDICQKFLLNAFRCQTCGYKFHEHCSTKVPTMC) adopts a Phorbol-ester/DAG-type zinc-finger fold. Zn(2+) is bound by residues His138, Cys151, Cys154, Cys164, Cys167, His172, Cys175, and Cys183. Ser257 is modified (phosphoserine). Thr266 is modified (phosphothreonine; by autocatalysis). Residues 279 to 323 (LRSHSESGSPNNLSPTGWSNAKAPAPTHREKAASSTGQEKNKIRA) form a disordered region. The span at 284–297 (ESGSPNNLSPTGWS) shows a compositional bias: polar residues. Ser329 is subject to Phosphoserine. The 261-residue stretch at 340–600 (VMLSSRIGSG…PQILSSIELL (261 aa)) folds into the Protein kinase domain. ATP-binding positions include 346 to 354 (IGSGSFGTV) and Lys366. Asp459 acts as the Proton acceptor in catalysis. Ser490 bears the Phosphoserine mark.

It belongs to the protein kinase superfamily. TKL Ser/Thr protein kinase family. RAF subfamily. It depends on Zn(2+) as a cofactor. Post-translationally, phosphorylation at Ser-257 inactivates kinase activity. Dephosphorylation of Ser-257 by a complex containing protein phosphatase 1 relieves inactivation, leading to stimulate RAF1 activity.

It localises to the cytoplasm. It is found in the cell membrane. It catalyses the reaction L-seryl-[protein] + ATP = O-phospho-L-seryl-[protein] + ADP + H(+). The catalysed reaction is L-threonyl-[protein] + ATP = O-phospho-L-threonyl-[protein] + ADP + H(+). Functionally, serine/threonine-protein kinase that acts as a regulatory link between the membrane-associated Ras GTPases and the MAPK/ERK cascade, and this critical regulatory link functions as a switch determining cell fate decisions. RAF1 activation initiates a mitogen-activated protein kinase (MAPK) cascade that comprises a sequential phosphorylation of the dual-specific MAPK kinases (MAP2K1/MEK1 and MAP2K2/MEK2) and the extracellular signal-regulated kinases (MAPK3/ERK1 and MAPK1/ERK2). The polypeptide is RAF proto-oncogene serine/threonine-protein kinase (raf1) (Xenopus laevis (African clawed frog)).